The following is a 432-amino-acid chain: Trigger factor (432 aa).

Residues 162 to 247 (GDLVKFDYQG…VKEVQAPVLP (86 aa)) form the PPIase FKBP-type domain.

Belongs to the FKBP-type PPIase family. Tig subfamily.

It localises to the cytoplasm. It carries out the reaction [protein]-peptidylproline (omega=180) = [protein]-peptidylproline (omega=0). Involved in protein export. Acts as a chaperone by maintaining the newly synthesized protein in an open conformation. Functions as a peptidyl-prolyl cis-trans isomerase. The sequence is that of Trigger factor from Thiobacillus denitrificans (strain ATCC 25259 / T1).